Consider the following 773-residue polypeptide: Protein FAM149A (773 aa).

Low complexity-rich tracts occupy residues 18-37 and 54-90; these read TSTA…AAAA and LLRA…AAGA. Disordered regions lie at residues 18-155, 173-210, 232-264, and 568-613; these read TSTA…RELG, DIGE…DSLP, FSSS…TERG, and TQNE…PWRL. Positions 174–186 are enriched in acidic residues; the sequence is IGEEGASDGDSGD. Residues 245–264 are compositionally biased toward low complexity; sequence TSWSGSATQSSTTGSSTERG.

The protein belongs to the FAM149 family.

The polypeptide is Protein FAM149A (FAM149A) (Homo sapiens (Human)).